Consider the following 176-residue polypeptide: NADH-quinone oxidoreductase subunit 10 (176 aa).

5 helical membrane passes run 2–22, 26–46, 56–76, 91–111, and 137–157; these read SLLE…VVTL, IHAA…YVAL, VIVY…LLFA, PLAA…LWGL, and FVLL…VALV.

Belongs to the complex I subunit 6 family. As to quaternary structure, NDH-1 is composed of 15 different subunits, Nqo1 to Nqo15. The complex has a L-shaped structure, with the hydrophobic arm (subunits Nqo7, Nqo8 and Nqo10 to Nqo14) embedded in the membrane and the hydrophilic peripheral arm (subunits Nqo1 to Nqo6, Nqo9 and Nqo15) protruding into the bacterial cytoplasm. The hydrophilic domain contains all the redox centers.

The protein localises to the cell inner membrane. The enzyme catalyses a quinone + NADH + 5 H(+)(in) = a quinol + NAD(+) + 4 H(+)(out). NDH-1 shuttles electrons from NADH, via FMN and iron-sulfur (Fe-S) centers, to quinones in the respiratory chain. The immediate electron acceptor for the enzyme in this species is menaquinone. Couples the redox reaction to proton translocation (for every two electrons transferred, four hydrogen ions are translocated across the cytoplasmic membrane), and thus conserves the redox energy in a proton gradient required for the synthesis of ATP. This Thermus thermophilus (strain ATCC 27634 / DSM 579 / HB8) protein is NADH-quinone oxidoreductase subunit 10 (nqo10).